We begin with the raw amino-acid sequence, 444 residues long: tRNA-2-methylthio-N(6)-dimethylallyladenosine synthase (444 aa).

The MTTase N-terminal domain occupies 6–124 (KTFKIITYGC…LPQLIEEIKA (119 aa)). Cys15, Cys51, Cys85, Cys161, Cys165, and Cys168 together coordinate [4Fe-4S] cluster. A Radical SAM core domain is found at 147–377 (RARGAQAFVT…MELQNSISLA (231 aa)). A TRAM domain is found at 380 to 443 (EALVGQEVEV…TWLLKGEMVD (64 aa)).

This sequence belongs to the methylthiotransferase family. MiaB subfamily. As to quaternary structure, monomer. The cofactor is [4Fe-4S] cluster.

Its subcellular location is the cytoplasm. It carries out the reaction N(6)-dimethylallyladenosine(37) in tRNA + (sulfur carrier)-SH + AH2 + 2 S-adenosyl-L-methionine = 2-methylsulfanyl-N(6)-dimethylallyladenosine(37) in tRNA + (sulfur carrier)-H + 5'-deoxyadenosine + L-methionine + A + S-adenosyl-L-homocysteine + 2 H(+). Catalyzes the methylthiolation of N6-(dimethylallyl)adenosine (i(6)A), leading to the formation of 2-methylthio-N6-(dimethylallyl)adenosine (ms(2)i(6)A) at position 37 in tRNAs that read codons beginning with uridine. This chain is tRNA-2-methylthio-N(6)-dimethylallyladenosine synthase, found in Moorella thermoacetica (strain ATCC 39073 / JCM 9320).